A 436-amino-acid polypeptide reads, in one-letter code: GTPase Der (436 aa).

EngA-type G domains are found at residues 4–167 and 176–351; these read PVIA…PKIE and IRFS…ESHS. Residues 10-17, 57-61, 119-122, 182-189, 229-233, and 294-297 contribute to the GTP site; these read GRPNVGKS, DTGGI, NKVD, DTAGM, and NKWD. In terms of domain architecture, KH-like spans 352 to 436; the sequence is IRIQTNVLND…PIHIIARARD (85 aa).

It belongs to the TRAFAC class TrmE-Era-EngA-EngB-Septin-like GTPase superfamily. EngA (Der) GTPase family. As to quaternary structure, associates with the 50S ribosomal subunit.

Functionally, GTPase that plays an essential role in the late steps of ribosome biogenesis. This Bacillus cereus (strain ATCC 10987 / NRS 248) protein is GTPase Der.